The following is a 342-amino-acid chain: Glycerol-3-phosphate dehydrogenase [NAD(P)+] (342 aa).

Positions 13, 14, and 108 each coordinate NADPH. Sn-glycerol 3-phosphate contacts are provided by lysine 108, glycine 139, and serine 141. Alanine 143 is an NADPH binding site. The sn-glycerol 3-phosphate site is built by lysine 194, aspartate 247, serine 257, arginine 258, and asparagine 259. The active-site Proton acceptor is the lysine 194. Arginine 258 contributes to the NADPH binding site. Positions 282 and 284 each coordinate NADPH.

The protein belongs to the NAD-dependent glycerol-3-phosphate dehydrogenase family.

The protein localises to the cytoplasm. The enzyme catalyses sn-glycerol 3-phosphate + NAD(+) = dihydroxyacetone phosphate + NADH + H(+). It carries out the reaction sn-glycerol 3-phosphate + NADP(+) = dihydroxyacetone phosphate + NADPH + H(+). It functions in the pathway membrane lipid metabolism; glycerophospholipid metabolism. Its function is as follows. Catalyzes the reduction of the glycolytic intermediate dihydroxyacetone phosphate (DHAP) to sn-glycerol 3-phosphate (G3P), the key precursor for phospholipid synthesis. The chain is Glycerol-3-phosphate dehydrogenase [NAD(P)+] from Lactococcus lactis subsp. cremoris (strain MG1363).